The primary structure comprises 140 residues: MTSPLLESRRQLRKCAFQALMSLEFGTDVETACRFAYTHDREDTDVQLPAFLIDLVSGVQAKKEELDKQITQHLKAGWTIERLTLVERNLLRLGVFEITSFDTPQLVAVNEAIELAKDFSDQKSARFINGLLSQFVTEEQ.

The protein belongs to the NusB family.

Its function is as follows. Involved in transcription antitermination. Required for transcription of ribosomal RNA (rRNA) genes. Binds specifically to the boxA antiterminator sequence of the ribosomal RNA (rrn) operons. In Streptococcus pneumoniae serotype 2 (strain D39 / NCTC 7466), this protein is Transcription antitermination protein NusB.